The following is a 123-amino-acid chain: Small ribosomal subunit protein uS12 (123 aa).

Positions 1–32 (MPTIQQLVRKGRTDKISKNKTPALKGSPQRRG) are disordered. Residue D89 is modified to 3-methylthioaspartic acid. The segment at 103-123 (DTQGVKGRKQARSRYGAKKEK) is disordered. Basic residues predominate over residues 108–123 (KGRKQARSRYGAKKEK).

It belongs to the universal ribosomal protein uS12 family. In terms of assembly, part of the 30S ribosomal subunit. Contacts proteins S8 and S17. May interact with IF1 in the 30S initiation complex.

In terms of biological role, with S4 and S5 plays an important role in translational accuracy. Interacts with and stabilizes bases of the 16S rRNA that are involved in tRNA selection in the A site and with the mRNA backbone. Located at the interface of the 30S and 50S subunits, it traverses the body of the 30S subunit contacting proteins on the other side and probably holding the rRNA structure together. The combined cluster of proteins S8, S12 and S17 appears to hold together the shoulder and platform of the 30S subunit. The polypeptide is Small ribosomal subunit protein uS12 (Cutibacterium acnes (strain DSM 16379 / KPA171202) (Propionibacterium acnes)).